A 103-amino-acid chain; its full sequence is Small ribosomal subunit protein uS10 (103 aa).

It belongs to the universal ribosomal protein uS10 family. In terms of assembly, part of the 30S ribosomal subunit.

In terms of biological role, involved in the binding of tRNA to the ribosomes. In Colwellia psychrerythraea (strain 34H / ATCC BAA-681) (Vibrio psychroerythus), this protein is Small ribosomal subunit protein uS10.